A 98-amino-acid polypeptide reads, in one-letter code: Large ribosomal subunit protein uL23 (98 aa).

This sequence belongs to the universal ribosomal protein uL23 family. As to quaternary structure, part of the 50S ribosomal subunit. Contacts protein L29, and trigger factor when it is bound to the ribosome.

Functionally, one of the early assembly proteins it binds 23S rRNA. One of the proteins that surrounds the polypeptide exit tunnel on the outside of the ribosome. Forms the main docking site for trigger factor binding to the ribosome. The protein is Large ribosomal subunit protein uL23 of Ruegeria sp. (strain TM1040) (Silicibacter sp.).